The primary structure comprises 461 residues: V-type ATP synthase beta chain (461 aa).

This sequence belongs to the ATPase alpha/beta chains family.

Produces ATP from ADP in the presence of a proton gradient across the membrane. The V-type beta chain is a regulatory subunit. The protein is V-type ATP synthase beta chain of Streptococcus pneumoniae serotype 19F (strain G54).